Here is a 292-residue protein sequence, read N- to C-terminus: Homoserine kinase (292 aa).

P84 to A94 provides a ligand contact to ATP.

This sequence belongs to the GHMP kinase family. Homoserine kinase subfamily.

Its subcellular location is the cytoplasm. The enzyme catalyses L-homoserine + ATP = O-phospho-L-homoserine + ADP + H(+). The protein operates within amino-acid biosynthesis; L-threonine biosynthesis; L-threonine from L-aspartate: step 4/5. Functionally, catalyzes the ATP-dependent phosphorylation of L-homoserine to L-homoserine phosphate. This Thermus thermophilus (strain ATCC 27634 / DSM 579 / HB8) protein is Homoserine kinase.